A 283-amino-acid polypeptide reads, in one-letter code: MIVTEKAPAKINLALDTPMRYLDGLPRWNMVMNAVDLADYVTVEIHHRPQTIKVYTNSGFLPNDQRNLAYQAAHILKTRFHQTDGVTIRIKKKIPVAAGLGGGSSDAAAVLRALNKAWRLGLSLDELARLSLSIDSDVPFCVYSQTAHVTGHGEIVEPLPAFPHYWVVIAKPKLSVSTPVILRQINYERLVHPQTDQLVEAIKEGKFQESFQYMGNALEAVTMEAHPEIARLKERMQKLGADVAQMSGTGPSVFALCHAESRAKRIYNSLRGFCPEVYQVVLL.

K10 is a catalytic residue. Position 95–105 (95–105 (PVAAGLGGGSS)) interacts with ATP. D137 is a catalytic residue.

It belongs to the GHMP kinase family. IspE subfamily.

The catalysed reaction is 4-CDP-2-C-methyl-D-erythritol + ATP = 4-CDP-2-C-methyl-D-erythritol 2-phosphate + ADP + H(+). The protein operates within isoprenoid biosynthesis; isopentenyl diphosphate biosynthesis via DXP pathway; isopentenyl diphosphate from 1-deoxy-D-xylulose 5-phosphate: step 3/6. Catalyzes the phosphorylation of the position 2 hydroxy group of 4-diphosphocytidyl-2C-methyl-D-erythritol. This Limosilactobacillus fermentum (strain NBRC 3956 / LMG 18251) (Lactobacillus fermentum) protein is 4-diphosphocytidyl-2-C-methyl-D-erythritol kinase.